The primary structure comprises 750 residues: GTP pyrophosphokinase rsh (750 aa).

Residues 45–144 (YFSHPLEVAA…VKLADRLHNM (100 aa)) enclose the HD domain. Positions 390-451 (DQVFCFTPKG…KNGDEVDIIR (62 aa)) constitute a TGS domain. The tract at residues 587-613 (AAKVDPAATTPKPGKRALPIRGTNPDL) is disordered. One can recognise an ACT domain in the interval 676 to 750 (RISVSAINSP…SVSSAKRVNG (75 aa)).

It belongs to the RelA/SpoT family.

The catalysed reaction is GTP + ATP = guanosine 3'-diphosphate 5'-triphosphate + AMP. In terms of biological role, functions as a (p)ppGpp synthase. In eubacteria ppGpp (guanosine 3'-diphosphate 5'-diphosphate) is a mediator of the stringent response that coordinates a variety of cellular activities in response to changes in nutritional abundance. It is necessary for persistence in mice, essential for intracellular growth of Brucella and required for expression of the type IV secretion system VirB and therefore plays a role in adaptation of Brucella to its intracellular host environment. In Brucella melitensis biotype 1 (strain ATCC 23456 / CCUG 17765 / NCTC 10094 / 16M), this protein is GTP pyrophosphokinase rsh (rsh).